Here is a 489-residue protein sequence, read N- to C-terminus: Betaine aldehyde dehydrogenase (489 aa).

The K(+) site is built by threonine 26 and aspartate 93. 150 to 152 (GAW) contacts NAD(+). Catalysis depends on lysine 162, which acts as the Charge relay system. Position 176-179 (176-179 (KPSE)) interacts with NAD(+). Residue valine 180 coordinates K(+). An NAD(+)-binding site is contributed by 229-232 (GVET). Leucine 245 contacts K(+). Catalysis depends on glutamate 251, which acts as the Proton acceptor. NAD(+)-binding residues include glycine 253, cysteine 285, and glutamate 386. The active-site Nucleophile is cysteine 285. Residue cysteine 285 is modified to Cysteine sulfenic acid (-SOH). Residues lysine 456 and glycine 459 each coordinate K(+). Glutamate 463 (charge relay system) is an active-site residue.

Belongs to the aldehyde dehydrogenase family. Dimer of dimers. K(+) serves as cofactor.

It carries out the reaction betaine aldehyde + NAD(+) + H2O = glycine betaine + NADH + 2 H(+). It functions in the pathway amine and polyamine biosynthesis; betaine biosynthesis via choline pathway; betaine from betaine aldehyde: step 1/1. Its function is as follows. Involved in the biosynthesis of the osmoprotectant glycine betaine. Catalyzes the irreversible oxidation of betaine aldehyde to the corresponding acid. The sequence is that of Betaine aldehyde dehydrogenase from Burkholderia vietnamiensis (strain G4 / LMG 22486) (Burkholderia cepacia (strain R1808)).